An 875-amino-acid chain; its full sequence is DNA mismatch repair protein MutS (875 aa).

Residue 625 to 632 (GPNMGGKS) participates in ATP binding.

This sequence belongs to the DNA mismatch repair MutS family.

This protein is involved in the repair of mismatches in DNA. It is possible that it carries out the mismatch recognition step. This protein has a weak ATPase activity. The sequence is that of DNA mismatch repair protein MutS from Symbiobacterium thermophilum (strain DSM 24528 / JCM 14929 / IAM 14863 / T).